The chain runs to 318 residues: DNA primase small subunit PriS (318 aa).

Residues aspartate 95, aspartate 97, and aspartate 224 contribute to the active site.

The protein belongs to the eukaryotic-type primase small subunit family. Heterodimer of a small subunit (PriS) and a large subunit (PriL). Mg(2+) serves as cofactor. Requires Mn(2+) as cofactor.

Its function is as follows. Catalytic subunit of DNA primase, an RNA polymerase that catalyzes the synthesis of short RNA molecules used as primers for DNA polymerase during DNA replication. The small subunit contains the primase catalytic core and has DNA synthesis activity on its own. Binding to the large subunit stabilizes and modulates the activity, increasing the rate of DNA synthesis while decreasing the length of the DNA fragments, and conferring RNA synthesis capability. The DNA polymerase activity may enable DNA primase to also catalyze primer extension after primer synthesis. May also play a role in DNA repair. The polypeptide is DNA primase small subunit PriS (Sulfurisphaera tokodaii (strain DSM 16993 / JCM 10545 / NBRC 100140 / 7) (Sulfolobus tokodaii)).